Here is a 240-residue protein sequence, read N- to C-terminus: Acetoacetyl-CoA reductase (240 aa).

Residues 18 to 20 and 82 to 86 contribute to the NADP(+) site; these read RGI and NAGIT. Substrate-binding positions include S134 and 141–144; that span reads NVGQ. The Proton acceptor role is filled by Y147. 177–180 lines the NADP(+) pocket; the sequence is PGFI. A substrate-binding site is contributed by 178-179; that stretch reads GF.

The protein belongs to the short-chain dehydrogenases/reductases (SDR) family.

It carries out the reaction a (3R)-3-hydroxyacyl-CoA + NADP(+) = a 3-oxoacyl-CoA + NADPH + H(+). The protein operates within biopolymer metabolism; poly-(R)-3-hydroxybutanoate biosynthesis. Catalyzes the reduction of acetoacetyl-CoA to (R)-3-hydroxybutyryl-CoA. When expressed in E.coli with Synechocystis PhaA, PhaC and PhaE confers the ability to synthesize up to 12% (w/w) poly(3-hydroxybutyrate) (PHB) depending on the carbon source. The protein is Acetoacetyl-CoA reductase of Synechocystis sp. (strain ATCC 27184 / PCC 6803 / Kazusa).